A 181-amino-acid polypeptide reads, in one-letter code: Ribonuclease HII (181 aa).

The RNase H type-2 domain maps to 1–181; that stretch reads MICGIDEVGR…SLHRKSFRLI (181 aa). Residues D6, E7, and D98 each contribute to the a divalent metal cation site.

Belongs to the RNase HII family. Mn(2+) is required as a cofactor. It depends on Mg(2+) as a cofactor.

It is found in the cytoplasm. The catalysed reaction is Endonucleolytic cleavage to 5'-phosphomonoester.. Its function is as follows. Endonuclease that specifically degrades the RNA of RNA-DNA hybrids. The chain is Ribonuclease HII from Borrelia recurrentis (strain A1).